We begin with the raw amino-acid sequence, 509 residues long: Glycogen synthase (509 aa).

ADP-alpha-D-glucose is bound at residue Lys47.

This sequence belongs to the glycosyltransferase 1 family. Bacterial/plant glycogen synthase subfamily.

The enzyme catalyses [(1-&gt;4)-alpha-D-glucosyl](n) + ADP-alpha-D-glucose = [(1-&gt;4)-alpha-D-glucosyl](n+1) + ADP + H(+). The protein operates within glycan biosynthesis; glycogen biosynthesis. In terms of biological role, synthesizes alpha-1,4-glucan chains using ADP-glucose. This is Glycogen synthase from Xanthomonas euvesicatoria pv. vesicatoria (strain 85-10) (Xanthomonas campestris pv. vesicatoria).